The chain runs to 930 residues: Isoleucine--tRNA ligase (930 aa).

The 'HIGH' region motif lies at 57 to 67; that stretch reads PYANGNIHVGH. E554 is a binding site for L-isoleucyl-5'-AMP. The short motif at 595–599 is the 'KMSKS' region element; that stretch reads KMSKS. K598 is an ATP binding site. Residues C888, C891, C908, and C911 each coordinate Zn(2+).

This sequence belongs to the class-I aminoacyl-tRNA synthetase family. IleS type 1 subfamily. As to quaternary structure, monomer. Zn(2+) serves as cofactor.

It localises to the cytoplasm. The enzyme catalyses tRNA(Ile) + L-isoleucine + ATP = L-isoleucyl-tRNA(Ile) + AMP + diphosphate. Catalyzes the attachment of isoleucine to tRNA(Ile). As IleRS can inadvertently accommodate and process structurally similar amino acids such as valine, to avoid such errors it has two additional distinct tRNA(Ile)-dependent editing activities. One activity is designated as 'pretransfer' editing and involves the hydrolysis of activated Val-AMP. The other activity is designated 'posttransfer' editing and involves deacylation of mischarged Val-tRNA(Ile). The chain is Isoleucine--tRNA ligase from Streptococcus pneumoniae (strain JJA).